Consider the following 275-residue polypeptide: ATP synthase subunit a (275 aa).

A run of 7 helical transmembrane segments spans residues 46–66, 104–124, 135–155, 166–186, 204–224, 231–251, and 252–272; these read RLMLIRLLMSVLVAAFFVIAM, FLPVITTIFFIVVASNMASII, IGMPLVLAALAYIVFNYVGIK, SIVVPGVPLPLHFLLVPIEFI, MLAGHILLVLFFSATNYFFFV, IFGVPSIIAGIAFTFFELLVI, and FLQAYVFALLTAVYIELALHA.

Belongs to the ATPase A chain family. In terms of assembly, F-type ATPases have 2 components, CF(1) - the catalytic core - and CF(0) - the membrane proton channel. CF(1) has five subunits: alpha(3), beta(3), gamma(1), delta(1), epsilon(1). CF(0) has three main subunits: a(1), b(2) and c(9-12). The alpha and beta chains form an alternating ring which encloses part of the gamma chain. CF(1) is attached to CF(0) by a central stalk formed by the gamma and epsilon chains, while a peripheral stalk is formed by the delta and b chains.

It localises to the cell membrane. In terms of biological role, key component of the proton channel; it plays a direct role in the translocation of protons across the membrane. In Rhodococcus erythropolis (strain PR4 / NBRC 100887), this protein is ATP synthase subunit a.